Consider the following 439-residue polypeptide: Ornithine aminotransferase, mitochondrial (439 aa).

A mitochondrion-targeting transit peptide spans 1–25 (MLSKLASLQTIAALRRGVHTSVASA). N6-acetyllysine is present on residues lysine 49 and lysine 66. Position 102 is an N6-succinyllysine (lysine 102). N6-acetyllysine; alternate is present on lysine 107. N6-succinyllysine; alternate is present on lysine 107. The residue at position 292 (lysine 292) is an N6-(pyridoxal phosphate)lysine. The residue at position 362 (lysine 362) is an N6-acetyllysine; alternate. Lysine 362 is subject to N6-succinyllysine; alternate. Lysine 386 and lysine 392 each carry N6-acetyllysine. Lysine 405 is modified (N6-acetyllysine; alternate). At lysine 405 the chain carries N6-succinyllysine; alternate. Position 421 is an N6-acetyllysine (lysine 421).

The protein belongs to the class-III pyridoxal-phosphate-dependent aminotransferase family. As to quaternary structure, homohexamer. It depends on pyridoxal 5'-phosphate as a cofactor.

Its subcellular location is the mitochondrion matrix. It catalyses the reaction L-ornithine + 2-oxoglutarate = L-glutamate 5-semialdehyde + L-glutamate. Its pathway is amino-acid biosynthesis; L-proline biosynthesis; L-glutamate 5-semialdehyde from L-ornithine: step 1/1. Its function is as follows. Catalyzes the reversible interconversion of L-ornithine and 2-oxoglutarate to L-glutamate semialdehyde and L-glutamate. This is Ornithine aminotransferase, mitochondrial (Oat) from Mus musculus (Mouse).